A 542-amino-acid polypeptide reads, in one-letter code: Glutamyl-tRNA reductase 2, chloroplastic (542 aa).

Residues 142–145 (TCNR), serine 202, 207–209 (EGQ), and glutamine 213 each bind substrate. Cysteine 143 acts as the Nucleophile in catalysis. NADP(+) is bound at residue 284 to 289 (GAGKMG).

It belongs to the glutamyl-tRNA reductase family. As to expression, found in all tissues examined.

It is found in the plastid. Its subcellular location is the chloroplast. It catalyses the reaction (S)-4-amino-5-oxopentanoate + tRNA(Glu) + NADP(+) = L-glutamyl-tRNA(Glu) + NADPH + H(+). The protein operates within porphyrin-containing compound metabolism; protoporphyrin-IX biosynthesis; 5-aminolevulinate from L-glutamyl-tRNA(Glu): step 1/2. In terms of biological role, catalyzes the NADPH-dependent reduction of glutamyl-tRNA(Glu) to glutamate 1-semialdehyde (GSA). In Cucumis sativus (Cucumber), this protein is Glutamyl-tRNA reductase 2, chloroplastic (HEMA2).